Here is a 542-residue protein sequence, read N- to C-terminus: Peptide chain release factor 3 (542 aa).

Residues 14-283 form the tr-type G domain; it reads ERRRNFAIIS…AFLDYALKPA (270 aa). GTP contacts are provided by residues 23–30, 91–95, and 145–148; these read SHPDAGKT, DTPGH, and NKLD.

It belongs to the TRAFAC class translation factor GTPase superfamily. Classic translation factor GTPase family. PrfC subfamily.

It localises to the cytoplasm. Functionally, increases the formation of ribosomal termination complexes and stimulates activities of RF-1 and RF-2. It binds guanine nucleotides and has strong preference for UGA stop codons. It may interact directly with the ribosome. The stimulation of RF-1 and RF-2 is significantly reduced by GTP and GDP, but not by GMP. The polypeptide is Peptide chain release factor 3 (Cyanothece sp. (strain PCC 7425 / ATCC 29141)).